Reading from the N-terminus, the 66-residue chain is Toxin Boma6b (66 aa).

The region spanning 2–64 (RDAYIAQNYN…VPIKVEGKCH (63 aa)) is the LCN-type CS-alpha/beta domain. Cystine bridges form between Cys12-Cys63, Cys16-Cys36, Cys22-Cys46, and Cys26-Cys48.

Belongs to the long (4 C-C) scorpion toxin superfamily. Sodium channel inhibitor family. Alpha subfamily. As to expression, expressed by the venom gland.

Its subcellular location is the secreted. Its function is as follows. Alpha toxins bind voltage-independently at site-3 of sodium channels (Nav) and inhibit the inactivation of the activated channels, thereby blocking neuronal transmission. The polypeptide is Toxin Boma6b (Buthus occitanus mardochei (Moroccan scorpion)).